The chain runs to 185 residues: Ribosome-recycling factor (185 aa).

Belongs to the RRF family.

The protein resides in the cytoplasm. Its function is as follows. Responsible for the release of ribosomes from messenger RNA at the termination of protein biosynthesis. May increase the efficiency of translation by recycling ribosomes from one round of translation to another. The protein is Ribosome-recycling factor of Streptococcus pneumoniae (strain P1031).